Here is a 308-residue protein sequence, read N- to C-terminus: Methionyl-tRNA formyltransferase (308 aa).

Residue 110-113 (SLLP) coordinates (6S)-5,6,7,8-tetrahydrofolate.

It belongs to the Fmt family.

It carries out the reaction L-methionyl-tRNA(fMet) + (6R)-10-formyltetrahydrofolate = N-formyl-L-methionyl-tRNA(fMet) + (6S)-5,6,7,8-tetrahydrofolate + H(+). Attaches a formyl group to the free amino group of methionyl-tRNA(fMet). The formyl group appears to play a dual role in the initiator identity of N-formylmethionyl-tRNA by promoting its recognition by IF2 and preventing the misappropriation of this tRNA by the elongation apparatus. This chain is Methionyl-tRNA formyltransferase, found in Neisseria meningitidis serogroup A / serotype 4A (strain DSM 15465 / Z2491).